Consider the following 476-residue polypeptide: MSFTVAIIGRPNVGKSTLFNRLVGKKLALVDDTPGVTRDRRPGDAKLVDLKFRIIDTAGLEESSPDSLQGRMWAQTEAAIDEADLSLFVVDAKAGLTPADQTLAEMLRRRGKPVVVVANKSEARGSEGGFYDAFTLGLGEPCPISAEHGQGMLDLRDAIVAALGEERAFPPAEDVAETNVDIRPVAGEGTEDEEVEPAYDETKPLRVAIVGRPNAGKSTLINRFLGEDRLLTGPEAGITRDSISVEWDWRGRTIKMFDTAGMRRKAKVQEKLEKLSVADALRAIRFAETVVIVFDATIPFEKQDLQIVDLVLREGRAAVLAFNKWDLVENWQALLVDLREKTERLLPQARGIRAVPISGHTGYGLDRLMQAIIETDKVWNRRISTARLNRWLESQQVQHPPPAVSGRRLKLKYMTQVKARPPGFMISCTRPEAVPESYTRYLINGLRNDFDLPGVPIRVHFRASENPFESKARKRR.

EngA-type G domains are found at residues 3–167 and 205–380; these read FTVA…GEER and LRVA…KVWN. Residues 9 to 16, 56 to 60, 119 to 122, 211 to 218, 258 to 262, and 323 to 326 each bind GTP; these read GRPNVGKS, DTAGL, NKSE, GRPNAGKS, DTAGM, and NKWD. One can recognise a KH-like domain in the interval 381–465; it reads RRISTARLNR…PIRVHFRASE (85 aa).

It belongs to the TRAFAC class TrmE-Era-EngA-EngB-Septin-like GTPase superfamily. EngA (Der) GTPase family. Associates with the 50S ribosomal subunit.

Its function is as follows. GTPase that plays an essential role in the late steps of ribosome biogenesis. The polypeptide is GTPase Der (Rhizobium meliloti (strain 1021) (Ensifer meliloti)).